The primary structure comprises 1678 residues: Hispidin synthase (1678 aa).

Positions 33–453 are adenylation (A) domain; the sequence is GEHRWSYREL…WLGRNTDFIQ (421 aa). Residues 586–661 form the Carrier 1 domain; that stretch reads DELSNTVKHI…SLSNAVYAKL (76 aa). An O-(pantetheine 4'-phosphoryl)serine modification is found at Ser620. The region spanning 683 to 1108 is the Ketosynthase family 3 (KS3) domain; the sequence is GKEIVVVGQA…GTLGGIVLEA (426 aa). Active-site for beta-ketoacyl synthase activity residues include Cys852, His988, and His1029. Positions 1201–1499 are malonyl-CoA:ACP transacylase (MAT) domain; the sequence is YKRGALAFAF…VAWSLLLSNG (299 aa). Positions 1562 to 1582 are disordered; sequence EETLSSGSSTPTLENTDLDSG. The span at 1564–1576 shows a compositional bias: polar residues; sequence TLSSGSSTPTLEN. Residues 1597 to 1672 form the Carrier 2 domain; sequence DDLRDSIVSS…EMVSNLVEQA (76 aa). Residue Ser1632 is modified to O-(pantetheine 4'-phosphoryl)serine.

The protein in the N-terminal section; belongs to the NRP synthetase family.

The catalysed reaction is (E)-caffeate + 2 malonyl-CoA + ATP + H(+) = hispidin + AMP + 2 CO2 + diphosphate + 2 CoA. The protein operates within secondary metabolite biosynthesis. In terms of biological role, PKS-NRPS hybrid synthetase; part of the gene cluster that mediates the fungal bioluminescence cycle. Performs the biosynthesis of hispidin from caffeic acid by two cycles of addition of malonyl units followed by lactonization. The fungal bioluminescence cycle begins with the hispidin synthetase that catalyzes the formation of hispidin which is further hydroxylated by the hispidin-3-hydroxylase, yielding the fungal luciferin 3-hydroxyhispidin. The luciferase then produces an endoperoxide as a high-energy intermediate with decomposition that yields oxyluciferin (also known as caffeoylpyruvate) and light emission. Oxyluciferin can be recycled to caffeic acid by caffeoylpyruvate hydrolase. The protein is Hispidin synthase of Neonothopanus nambi (Agaricus nambi).